A 552-amino-acid polypeptide reads, in one-letter code: Steroid transmembrane transporter SLC22A24 (552 aa).

A run of 12 helical transmembrane segments spans residues 16–36 (FQIL…THIL), 144–164 (LKSV…LMFG), 175–197 (IYTW…PTFV), 201–220 (IFRF…AFIL), 232–252 (IGIT…GGLA), 255–275 (IRDW…LSLL), 349–369 (IICF…GLIL), 371–391 (LQDL…ITFI), 407–427 (INQS…TFLS), 435–455 (VVLA…FFVH), 474–494 (VFSR…VYSP), and 496–516 (LPWV…FCLP).

The protein belongs to the major facilitator (TC 2.A.1) superfamily. Organic cation transporter (TC 2.A.1.19) family.

It is found in the cell membrane. It catalyses the reaction estrone 3-sulfate(out) + glutarate(in) = estrone 3-sulfate(in) + glutarate(out). The catalysed reaction is 17beta-estradiol 17-O-(beta-D-glucuronate)(out) + glutarate(in) = 17beta-estradiol 17-O-(beta-D-glucuronate)(in) + glutarate(out). It carries out the reaction taurocholate(out) + glutarate(in) = taurocholate(in) + glutarate(out). The enzyme catalyses 5alpha-androstane-3alpha,17beta-diol 3-O-(beta-D-glucuronate)(out) + glutarate(in) = 5alpha-androstane-3alpha,17beta-diol 3-O-(beta-D-glucuronate)(in) + glutarate(out). It catalyses the reaction glycocholate(out) + glutarate(in) = glycocholate(in) + glutarate(out). The catalysed reaction is dehydroepiandrosterone 3-sulfate(out) + glutarate(in) = dehydroepiandrosterone 3-sulfate(in) + glutarate(out). It carries out the reaction glutarate(in) + succinate(out) = glutarate(out) + succinate(in). In terms of biological role, renal transmembrane organic anion/dicarboxylate exchanger that participates in the reabsorption of conjugated steroids, as well as bile acids, driven by an outward gradient of dicarboxylates such as glutarate or succinate. Transports androstanediol glucuronide (5alpha-androstane-3alpha,17beta-diol 3-O-(beta-D-glucuronate)), estrone 3-sulfate, and estradiol-17-glucuronide (17beta-estradiol 17-O-(beta-D-glucuronate)), and taurocholate. The sequence is that of Steroid transmembrane transporter SLC22A24 from Oryctolagus cuniculus (Rabbit).